The primary structure comprises 249 residues: Triosephosphate isomerase (249 aa).

Positions 10 and 12 each coordinate substrate. His94 (electrophile) is an active-site residue. The Proton acceptor role is filled by Glu166.

The protein belongs to the triosephosphate isomerase family. In terms of assembly, homodimer.

It catalyses the reaction D-glyceraldehyde 3-phosphate = dihydroxyacetone phosphate. It functions in the pathway carbohydrate biosynthesis; gluconeogenesis. Its pathway is carbohydrate degradation; glycolysis; D-glyceraldehyde 3-phosphate from glycerone phosphate: step 1/1. This Emericella nidulans (strain FGSC A4 / ATCC 38163 / CBS 112.46 / NRRL 194 / M139) (Aspergillus nidulans) protein is Triosephosphate isomerase (tpiA).